A 458-amino-acid chain; its full sequence is Protein adenylyltransferase FICD (458 aa).

The Cytoplasmic segment spans residues 1-23; sequence MMLIPMASVMAVTEPKWVSVWSR. The helical; Signal-anchor for type II membrane protein transmembrane segment at 24-44 threads the bilayer; sequence FLWVTLLSMVLGSLLALLLPL. Residues 45–458 are Lumenal-facing; the sequence is GAVEEQCLAV…GFKETLPVKP (414 aa). Residue Ser-79 is modified to O-AMP-serine; by autocatalysis. O-AMP-threonine; by autocatalysis is present on Thr-80. 2 TPR repeats span residues 106 to 139 and 140 to 173; these read ARAA…DPDF and VDAL…SPYH. Thr-183 carries the post-translational modification O-AMP-threonine; by autocatalysis. Residues 230 to 235 carry the Inhibitory (S/T)XXXE(G/N) motif motif; it reads TVAIEG. Residue Glu-234 participates in ATP binding. N-linked (GlcNAc...) asparagine glycosylation is present at Asn-275. The Fido domain maps to 285-420; the sequence is VTISDVLEIH…VRPFIRFIAK (136 aa). 316 to 319 serves as a coordination point for ATP; it reads VGHH. His-363 is a catalytic residue. ATP contacts are provided by residues 367–374, 399–400, and Asn-407; these read DGNGRTSR and YY. The N-linked (GlcNAc...) asparagine glycan is linked to Asn-446.

This sequence belongs to the fic family. As to quaternary structure, homodimer. Interacts with HD. The cofactor is Mg(2+). Mn(2+) serves as cofactor. In terms of processing, auto-AMPylated in vitro; it is unclear whether auto-AMPylation is relevant in vivo. Post-translationally, N-glycosylated; predominantly glycosylated at Asn-275. In terms of tissue distribution, ubiquitous.

Its subcellular location is the endoplasmic reticulum membrane. The catalysed reaction is L-tyrosyl-[protein] + ATP = O-(5'-adenylyl)-L-tyrosyl-[protein] + diphosphate. It carries out the reaction 3-O-(5'-adenylyl)-L-threonyl-[protein] + H2O = L-threonyl-[protein] + AMP + H(+). The enzyme catalyses L-threonyl-[protein] + ATP = 3-O-(5'-adenylyl)-L-threonyl-[protein] + diphosphate. Its activity is regulated as follows. The side chain of Glu-234 determines which of the two opposing activities (AMPylase or de-AMPylase) will take place. In response to endoplasmic reticulum stress, mediates de-AMPylase activity. Adenylyltransferase activity is inhibited by the inhibitory helix present at the N-terminus: Glu-234 binds ATP and competes with ATP-binding at Arg-374, thereby preventing adenylyltransferase activity. In unstressed cells, disengagement of Glu-234 promotes adenylyltransferase activity. Activation dissociates ATP-binding from Glu-234, allowing ordered binding of the entire ATP moiety with the alpha-phosphate in an orientation that is productive for accepting an incoming target hydroxyl side chain. Protein that can both mediate the addition of adenosine 5'-monophosphate (AMP) to specific residues of target proteins (AMPylation), and the removal of the same modification from target proteins (de-AMPylation), depending on the context. The side chain of Glu-231 determines which of the two opposing activities (AMPylase or de-AMPylase) will take place. Acts as a key regulator of the ERN1/IRE1-mediated unfolded protein response (UPR) by mediating AMPylation or de-AMPylation of HSPA5/BiP. In unstressed cells, acts as an adenylyltransferase by mediating AMPylation of HSPA5/BiP at 'Thr-518', thereby inactivating it. In response to endoplasmic reticulum stress, acts as a phosphodiesterase by mediating removal of ATP (de-AMPylation) from HSPA5/BiP at 'Thr-518', leading to restore HSPA5/BiP activity. Although it is able to AMPylate RhoA, Rac and Cdc42 Rho GTPases in vitro, Rho GTPases do not constitute physiological substrates. In Homo sapiens (Human), this protein is Protein adenylyltransferase FICD.